Consider the following 225-residue polypeptide: Cytidylate kinase (225 aa).

10–18 is a binding site for ATP; the sequence is GPASSGKST.

This sequence belongs to the cytidylate kinase family. Type 1 subfamily.

It is found in the cytoplasm. The catalysed reaction is CMP + ATP = CDP + ADP. The enzyme catalyses dCMP + ATP = dCDP + ADP. In Streptococcus sanguinis (strain SK36), this protein is Cytidylate kinase.